Reading from the N-terminus, the 285-residue chain is Nucleotide-binding protein CD630_34000 (285 aa).

8-15 (GLSGSGKS) lines the ATP pocket. Residue 59 to 62 (DIRG) coordinates GTP.

This sequence belongs to the RapZ-like family.

Displays ATPase and GTPase activities. This is Nucleotide-binding protein CD630_34000 from Clostridioides difficile (strain 630) (Peptoclostridium difficile).